The chain runs to 318 residues: Ankyrin repeat domain-containing protein 1 (318 aa).

Positions 37-77 (ALEKQEDLKTTSKSLIELEEEKQIKEKQLKSELLKKKLEER) form a coiled coil. 6 ANK repeats span residues 118–147 (VDQTTFFKAALDNKMPVIEKYLADGGDPNT), 151–180 (YKRTALHRACSEGHTDMVEKLIEAGANIEF), 184–213 (LESTALHWTCRGGSVETLKLLLNKGAAINA), 217–246 (LLSTPLHVAVRTGHYECAEHLIACEADLHA), 250–279 (EGDTPMHDGVRLNRYKMMRLLILYGVDLNI), and 283–314 (AGKTPMELVMQWQNGAKEIFNGLQSKSYKNSH).

The protein localises to the nucleus. In terms of biological role, may act as a nuclear transcription factor that negatively regulates the expression of cardiac genes. The protein is Ankyrin repeat domain-containing protein 1 (ankrd1) of Xenopus tropicalis (Western clawed frog).